A 264-amino-acid chain; its full sequence is Endochitinase At2g43590 (264 aa).

Positions 1-24 are cleaved as a signal peptide; it reads MAFTKISLVLLLCLLGFFSETVKS. Residues 25-59 form the Chitin-binding type-1 domain; sequence QNCGCAPNLCCSQFGYCGTDDAYCGVGCRSGPCRG. 4 disulfides stabilise this stretch: Cys-27–Cys-35, Cys-29–Cys-41, Cys-34–Cys-48, and Cys-52–Cys-57. The catalytic stretch occupies residues 66–264; it reads GSVGSIVTQG…GVDPGPNLSC (199 aa). Glu-128 serves as the catalytic Proton donor. N-linked (GlcNAc...) asparagine glycosylation is present at Asn-261.

The protein belongs to the glycosyl hydrolase 19 family. Chitinase class I subfamily.

The enzyme catalyses Random endo-hydrolysis of N-acetyl-beta-D-glucosaminide (1-&gt;4)-beta-linkages in chitin and chitodextrins.. The chain is Endochitinase At2g43590 from Arabidopsis thaliana (Mouse-ear cress).